The following is a 628-amino-acid chain: Otolith matrix protein OMM-64 (628 aa).

The first 20 residues, 1–20 (MLSRLLIVPLIFALAGLAIS), serve as a signal peptide directing secretion. The tract at residues 43–628 (KGDKDGGGLT…AAATALAAQS (586 aa)) is disordered. A compositionally biased stretch (low complexity) spans 78 to 93 (DSSPDTTDTPDASSSD). The segment covering 182 to 214 (TESPGSDSAESPGSDSAESPGSDSTESPGSDST) has biased composition (polar residues). 3 stretches are compositionally biased toward basic and acidic residues: residues 246 to 266 (ETDKDDDKSDDKSDADAATDK), 276 to 285 (ELDGKAHAED), and 311 to 343 (RPEKDVKNDSDDSKDTTEDDKPDKDDKKNRDSA). The N-linked (GlcNAc...) asparagine glycan is linked to Asn-318. Composition is skewed to acidic residues over residues 449–462 (DSQEDSVDESEAEP), 477–489 (EPQEDDSEEDTDD), 514–536 (DKEDMDKDDMDKDDMDKDDMDKD), 544–556 (DSVDDQSESDAEP), and 565–578 (DEIDGEETMTPDSE). A compositionally biased stretch (low complexity) spans 613 to 628 (ASQAADAAATALAAQS).

As to expression, specifically expressed in otolith matrix-producing cells.

It localises to the secreted. It is found in the extracellular space. Its subcellular location is the extracellular matrix. Its function is as follows. Calcium-binding component of otoliths, a calcium carbonate structure of the inner ear involved in hearing and balance sensing. Binds calcium. This is Otolith matrix protein OMM-64 from Oncorhynchus mykiss (Rainbow trout).